We begin with the raw amino-acid sequence, 152 residues long: Phospholipase A2 GL16-1 (152 aa).

The signal sequence occupies residues 1 to 21 (MNPAHLLVLLAVCVSLLGAST). A propeptide spanning residues 22–27 (IPPLPL) is cleaved from the precursor. Disulfide bonds link C38-C104, C54-C151, C56-C72, C71-C132, C78-C125, C88-C118, and C111-C123. Y55, G57, and G59 together coordinate Ca(2+). H75 is a catalytic residue. Ca(2+) is bound at residue D76. The active site involves D126.

It belongs to the phospholipase A2 family. Group I subfamily. Requires Ca(2+) as cofactor.

The protein resides in the secreted. It catalyses the reaction a 1,2-diacyl-sn-glycero-3-phosphocholine + H2O = a 1-acyl-sn-glycero-3-phosphocholine + a fatty acid + H(+). PA2 catalyzes the calcium-dependent hydrolysis of the 2-acyl groups in 3-sn-phosphoglycerides. This is Phospholipase A2 GL16-1 from Laticauda semifasciata (Black-banded sea krait).